The primary structure comprises 443 residues: Glutamyl-tRNA reductase (443 aa).

Residues 49-52 (TCNR), S109, 114-116 (EQQ), and Q120 each bind substrate. The active-site Nucleophile is C50. 189–194 (GAGSMG) is an NADP(+) binding site.

It belongs to the glutamyl-tRNA reductase family. Homodimer.

The catalysed reaction is (S)-4-amino-5-oxopentanoate + tRNA(Glu) + NADP(+) = L-glutamyl-tRNA(Glu) + NADPH + H(+). Its pathway is porphyrin-containing compound metabolism; protoporphyrin-IX biosynthesis; 5-aminolevulinate from L-glutamyl-tRNA(Glu): step 1/2. Functionally, catalyzes the NADPH-dependent reduction of glutamyl-tRNA(Glu) to glutamate 1-semialdehyde (GSA). This is Glutamyl-tRNA reductase from Mycobacteroides abscessus (strain ATCC 19977 / DSM 44196 / CCUG 20993 / CIP 104536 / JCM 13569 / NCTC 13031 / TMC 1543 / L948) (Mycobacterium abscessus).